The following is a 401-amino-acid chain: Argininosuccinate synthase (401 aa).

8-16 (AYSGGLDTS) is a binding site for ATP. Tyr85 contributes to the L-citrulline binding site. Gly115 contacts ATP. The L-aspartate site is built by Thr117, Asn121, and Asp122. Asn121 is a binding site for L-citrulline. L-citrulline contacts are provided by Arg125, Ser173, Glu258, and Tyr270.

This sequence belongs to the argininosuccinate synthase family. Type 1 subfamily. In terms of assembly, homotetramer.

The protein localises to the cytoplasm. The catalysed reaction is L-citrulline + L-aspartate + ATP = 2-(N(omega)-L-arginino)succinate + AMP + diphosphate + H(+). The protein operates within amino-acid biosynthesis; L-arginine biosynthesis; L-arginine from L-ornithine and carbamoyl phosphate: step 2/3. The sequence is that of Argininosuccinate synthase from Staphylococcus aureus (strain MRSA252).